The following is a 1011-amino-acid chain: Protein argonaute 1C (1011 aa).

The segment covering 1-11 (MASRRPTHRHH) has biased composition (basic residues). Disordered regions lie at residues 1–95 (MASR…SPLA) and 107–147 (RPSE…PLRP). Composition is skewed to low complexity over residues 28-53 (ARYA…ARGA) and 61-92 (QQQQ…ASSS). The segment covering 127–140 (ATTTPHHIPSSSKS) has biased composition (polar residues). The region spanning 352–462 (PVIDFVAQLL…LPMEVCKIVE (111 aa)) is the PAZ domain. In terms of domain architecture, Piwi spans 638–959 (LLIGILPDNN…AAFRARFYME (322 aa)). Residues 963–982 (SDSSSVVSGPGVRGPLSGSS) are compositionally biased toward low complexity. The interval 963–994 (SDSSSVVSGPGVRGPLSGSSTSRTRAPGGAAV) is disordered.

The protein belongs to the argonaute family. Ago subfamily.

Functionally, probably involved in the RNA silencing pathway. May bind to short RNAs such as microRNAs (miRNAs) or short interfering RNAs (siRNAs), and represses the translation of mRNAs which are complementary to them. The sequence is that of Protein argonaute 1C (AGO1C) from Oryza sativa subsp. japonica (Rice).